The following is a 225-amino-acid chain: RNA chaperone ProQ (225 aa).

The segment at Leu103–Val173 is disordered. Over residues Arg109–Gln118 the composition is skewed to low complexity. Residues Arg137–Pro146 show a composition bias toward basic residues. Residues Arg147–Lys156 show a composition bias toward basic and acidic residues.

The protein belongs to the ProQ family.

It is found in the cytoplasm. RNA chaperone with significant RNA binding, RNA strand exchange and RNA duplexing activities. May regulate ProP activity through an RNA-based, post-transcriptional mechanism. This is RNA chaperone ProQ from Klebsiella pneumoniae (strain 342).